Reading from the N-terminus, the 378-residue chain is UPF0754 membrane protein BALH_0780 (378 aa).

2 helical membrane-spanning segments follow: residues Met1–Thr21 and Tyr357–Leu377.

Belongs to the UPF0754 family.

The protein resides in the cell membrane. This is UPF0754 membrane protein BALH_0780 from Bacillus thuringiensis (strain Al Hakam).